Reading from the N-terminus, the 518-residue chain is MADLSSPDGDPTIRTLLRHVLDTADSHTPRRRQSTQTNPQRRRSQTPYSKRQGSQRKTSTRKHSHGTGSVGRLARVQGHGHLEEQTPRTLLQNILLTAPESSTVMPNPVVKPAQVPEVARPSRRGSSRGSLELQLPELDPPSTLAPGLKAPGKRKQKLRLSVFQQEVNQQLPLPQEQRGAADGSSLASSFNLSFVPSVQPQTVDRPGLARRRPVRRPVNIGAFLQNLENKSLTSALPGDSHRTPVAALPTDVVFEDTQPFSQPLAGCSLSVHHSLPNPSQTEVEDAERVVGPRTPSTGTRPQSQMSRAGFGASPLPFSEPQPQSPELREAVGSKEAEEPKDLEGSSGDEETSGMPASRELSSSAQDLLLAEEPHQLFEPPPSPGVAAVSSESVPAKLPSRTRTAQPRHHQDPYKAGLSHYVKLFSFHTKMPVEKAALEMVEKCLDEYFQRLCNDLEVFAAHAGRKTVKPKDLELLMRRQGLVTDQVSLHVLVERYLPLEYRQQLIPCAFRGNSVFPAQ.

Positions 1-70 are disordered; that stretch reads MADLSSPDGD…RKHSHGTGSV (70 aa). Residues 19–28 show a composition bias toward basic and acidic residues; sequence HVLDTADSHT. Residues 34–57 show a composition bias toward polar residues; the sequence is STQTNPQRRRSQTPYSKRQGSQRK. Thr86 is subject to Phosphothreonine. Positions 94-381 are flexible stalk domain; sequence ILLTAPESST…EPHQLFEPPP (288 aa). Disordered stretches follow at residues 102 to 156, 271 to 362, and 375 to 412; these read STVM…KRKQ, VHHS…ELSS, and QLFE…HQDP. The span at 294-306 shows a compositional bias: polar residues; sequence TPSTGTRPQSQMS. Residues Ser313, Ser324, Ser333, Ser345, Ser346, Ser357, and Ser382 each carry the phosphoserine modification. Basic and acidic residues predominate over residues 326–343; that stretch reads ELREAVGSKEAEEPKDLE. Over residues 384 to 395 the composition is skewed to low complexity; that stretch reads GVAAVSSESVPA.

Belongs to the CENP-T/CNN1 family. Component of the CENPA-CAD complex, composed of CENPI, CENPK, CENPL, CENPO, CENPP, CENPQ, CENPR and CENPS. The CENPA-CAD complex is probably recruited on centromeres by the CENPA-NAC complex, at least composed of CENPA, CENPC, CENPH, CENPM, CENPN, CENPT and CENPU. Identified in a centromeric complex containing histones H2A, H2B, H3 and H4, and at least CENPA, CENPB, CENPC, CENPT, CENPN, HJURP, SUPT16H, SSRP1 and RSF1. Interacts (via N-terminus) with the NDC80 complex. Heterodimer with CENPW; this dimer coassembles with CENPS-CENPX heterodimers at centromeres to form the tetrameric CENP-T-W-S-X complex. Post-translationally, dynamically phosphorylated during the cell cycle. Phosphorylated during G2 phase, metaphase and anaphase, but not during telophase or G1 phase.

The protein resides in the nucleus. It localises to the chromosome. Its subcellular location is the centromere. The protein localises to the kinetochore. Functionally, component of the CENPA-NAC (nucleosome-associated) complex, a complex that plays a central role in assembly of kinetochore proteins, mitotic progression and chromosome segregation. The CENPA-NAC complex recruits the CENPA-CAD (nucleosome distal) complex and may be involved in incorporation of newly synthesized CENPA into centromeres. Part of a nucleosome-associated complex that binds specifically to histone H3-containing nucleosomes at the centromere, as opposed to nucleosomes containing CENPA. Component of the heterotetrameric CENP-T-W-S-X complex that binds and supercoils DNA, and plays an important role in kinetochore assembly. CENPT has a fundamental role in kinetochore assembly and function. It is one of the inner kinetochore proteins, with most further proteins binding downstream. Required for normal chromosome organization and normal progress through mitosis. This chain is Centromere protein T (Cenpt), found in Rattus norvegicus (Rat).